Consider the following 101-residue polypeptide: Small ribosomal subunit protein uS10 (101 aa).

It belongs to the universal ribosomal protein uS10 family. Part of the 30S ribosomal subunit.

Involved in the binding of tRNA to the ribosomes. In Mycobacterium ulcerans (strain Agy99), this protein is Small ribosomal subunit protein uS10.